We begin with the raw amino-acid sequence, 252 residues long: Protein GrpE (252 aa).

Over residues methionine 1 to asparagine 22 the composition is skewed to polar residues. The tract at residues methionine 1 to serine 70 is disordered.

The protein belongs to the GrpE family. As to quaternary structure, homodimer.

The protein resides in the cytoplasm. Participates actively in the response to hyperosmotic and heat shock by preventing the aggregation of stress-denatured proteins, in association with DnaK and GrpE. It is the nucleotide exchange factor for DnaK and may function as a thermosensor. Unfolded proteins bind initially to DnaJ; upon interaction with the DnaJ-bound protein, DnaK hydrolyzes its bound ATP, resulting in the formation of a stable complex. GrpE releases ADP from DnaK; ATP binding to DnaK triggers the release of the substrate protein, thus completing the reaction cycle. Several rounds of ATP-dependent interactions between DnaJ, DnaK and GrpE are required for fully efficient folding. The sequence is that of Protein GrpE from Thermosynechococcus vestitus (strain NIES-2133 / IAM M-273 / BP-1).